Here is a 328-residue protein sequence, read N- to C-terminus: Nickel import system permease protein NikB (328 aa).

Helical transmembrane passes span 11–31 (LMQM…LMKL), 104–124 (LLIS…LGII), 139–159 (VIST…LLFI), 170–190 (ILSQ…AYII), 229–249 (ILPI…GTVV), and 279–299 (VLFI…LTLL). In terms of domain architecture, ABC transmembrane type-1 spans 100-297 (APITLLISFS…IINTIADLLT (198 aa)).

This sequence belongs to the binding-protein-dependent transport system permease family. OppBC subfamily. As to quaternary structure, the complex is composed of two ATP-binding proteins (NikD and NikE), two transmembrane proteins (NikB and NikC) and a solute-binding protein (NikA).

It is found in the cell membrane. Functionally, part of the ABC transporter complex NikABCDE (Opp2) involved in nickel import. Probably responsible for the translocation of the substrate across the membrane. This is Nickel import system permease protein NikB from Staphylococcus aureus (strain Mu50 / ATCC 700699).